A 759-amino-acid polypeptide reads, in one-letter code: Multifunctional tryptophan biosynthesis protein (759 aa).

A Glutamine amidotransferase type-1 domain is found at 27 to 223 (PIVMIDNYDS…LNLTAGTWEE (197 aa)). 80–82 (GPG) serves as a coordination point for L-glutamine. Cys108 acts as the Nucleophile; for GATase activity in catalysis. L-glutamine is bound by residues Gln112 and 158 to 159 (SL). Residues His197 and Glu199 each act as for GATase activity in the active site. The interval 257–519 (ILEKIHAQRL…DPAAFARELL (263 aa)) is indole-3-glycerol phosphate synthase. Residues 536 to 759 (LVKVCGTRSL…KAFINAVKEL (224 aa)) are N-(5'-phosphoribosyl)anthranilate isomerase.

The enzyme catalyses N-(5-phospho-beta-D-ribosyl)anthranilate = 1-(2-carboxyphenylamino)-1-deoxy-D-ribulose 5-phosphate. It carries out the reaction 1-(2-carboxyphenylamino)-1-deoxy-D-ribulose 5-phosphate + H(+) = (1S,2R)-1-C-(indol-3-yl)glycerol 3-phosphate + CO2 + H2O. It catalyses the reaction chorismate + L-glutamine = anthranilate + pyruvate + L-glutamate + H(+). Its pathway is amino-acid biosynthesis; L-tryptophan biosynthesis; L-tryptophan from chorismate: step 1/5. It participates in amino-acid biosynthesis; L-tryptophan biosynthesis; L-tryptophan from chorismate: step 3/5. It functions in the pathway amino-acid biosynthesis; L-tryptophan biosynthesis; L-tryptophan from chorismate: step 4/5. Its function is as follows. Trifunctional enzyme bearing the Gln amidotransferase (GATase) domain of anthranilate synthase, indole-glycerolphosphate synthase, and phosphoribosylanthranilate isomerase activities. This is Multifunctional tryptophan biosynthesis protein (trp1) from Schizosaccharomyces pombe (strain 972 / ATCC 24843) (Fission yeast).